Reading from the N-terminus, the 186-residue chain is GTP-dependent dephospho-CoA kinase (186 aa).

GTP is bound by residues Asp43, Ile44, Val45, Asp62, Glu120, and Asp143.

It belongs to the GTP-dependent DPCK family.

It carries out the reaction 3'-dephospho-CoA + GTP = GDP + CoA + H(+). It participates in cofactor biosynthesis; coenzyme A biosynthesis. In terms of biological role, catalyzes the GTP-dependent phosphorylation of the 3'-hydroxyl group of dephosphocoenzyme A to form coenzyme A (CoA). This chain is GTP-dependent dephospho-CoA kinase, found in Haloquadratum walsbyi (strain DSM 16790 / HBSQ001).